Consider the following 158-residue polypeptide: Rhombotin-2 (158 aa).

LIM zinc-binding domains are found at residues 28 to 90 and 92 to 154; these read LTCG…LFGQ and GLCA…WTKL.

Expression becomes restricted to the ventral blood island (VBI) as the embryo develops. In late neurula and early tailbud embryos, also expressed in the dorsal lateral plate (DLP), the site of definitive hematopoiesis in the tadpole. Expression in the DLP diminishes during tailbud stages. Expressed in circulating blood cells of tadpoles. Also expressed in non-hematopoietic sites, including the tailbud region and the central nervous system of early neurula embryos.

It localises to the nucleus. In terms of biological role, transcription factor that acts synergistically with tal1/scl and gata1 to specify embryonic dorsal mesoderm to a hematopoietic fate. Induces globin gene expression together with fgf. The sequence is that of Rhombotin-2 from Xenopus laevis (African clawed frog).